Here is a 155-residue protein sequence, read N- to C-terminus: uncharacterized protein (155 aa).

The transit peptide at 1 to 17 directs the protein to the mitochondrion; the sequence is MMRGASKRSISSAAVLL. Residues 111-155 form a disordered region; the sequence is WHRQQKRSQRRRSVAKYEQREEAARVEKEEREARDREMVRELFRR. Basic residues predominate over residues 113–124; it reads RQQKRSQRRRSV. The segment covering 125–155 has biased composition (basic and acidic residues); sequence AKYEQREEAARVEKEEREARDREMVRELFRR.

Belongs to the prokaryotic/mitochondrial release factor family.

It localises to the mitochondrion. This is an uncharacterized protein from Saccharomyces cerevisiae (strain ATCC 204508 / S288c) (Baker's yeast).